Here is an 83-residue protein sequence, read N- to C-terminus: Translation initiation factor IF-1 (83 aa).

One can recognise an S1-like domain in the interval 1–72 (MAKEELIEMQ…SKGRITFRHL (72 aa)).

Belongs to the IF-1 family. In terms of assembly, component of the 30S ribosomal translation pre-initiation complex which assembles on the 30S ribosome in the order IF-2 and IF-3, IF-1 and N-formylmethionyl-tRNA(fMet); mRNA recruitment can occur at any time during PIC assembly.

It is found in the cytoplasm. One of the essential components for the initiation of protein synthesis. Stabilizes the binding of IF-2 and IF-3 on the 30S subunit to which N-formylmethionyl-tRNA(fMet) subsequently binds. Helps modulate mRNA selection, yielding the 30S pre-initiation complex (PIC). Upon addition of the 50S ribosomal subunit IF-1, IF-2 and IF-3 are released leaving the mature 70S translation initiation complex. The polypeptide is Translation initiation factor IF-1 (Verminephrobacter eiseniae (strain EF01-2)).